Here is a 660-residue protein sequence, read N- to C-terminus: Class E vacuolar protein-sorting machinery protein HSE1 (660 aa).

In terms of domain architecture, VHS spans 16–148; that stretch reads ATDENLASED…QLRAKNHVFD (133 aa). Positions 146 to 254 are disordered; it reads VFDEPEPTPE…QPLEPEPPRV (109 aa). Residues 158–182 show a composition bias toward basic and acidic residues; sequence EEVRRRQEEEELQRVLELSKQDKGG. The 20-residue stretch at 164 to 183 folds into the UIM domain; the sequence is QEEEELQRVLELSKQDKGGR. A compositionally biased stretch (low complexity) spans 190 to 230; the sequence is PSGSAGASSSSAANNNTSPSIPQSQAQPLAQDQAQSQAAPQ. The SH3 domain occupies 257-316; that stretch reads NTATRVRAIYPFTGQEVGELDFERGDVIKVLDRGFKEWWRGACNGKIGIFPVTYVEALPE. Low complexity predominate over residues 437–503; sequence YSYQQYPQQP…PAQVQQDPAA (67 aa). The disordered stretch occupies residues 437 to 660; it reads YSYQQYPQQP…GMDRMSVHAP (224 aa). Over residues 517-533 the composition is skewed to polar residues; the sequence is GSTTSVNRIPSAQTAVQ. Composition is skewed to low complexity over residues 573-623 and 638-651; these read QQHG…AAYA and GTQQ…VTAG.

Belongs to the STAM family. Component of the ESCRT-0 complex composed of HSE1 and VPS27.

It is found in the endosome membrane. Component of the ESCRT-0 complex which is the sorting receptor for ubiquitinated cargo proteins at the multivesicular body (MVB). In Cryptococcus neoformans var. neoformans serotype D (strain JEC21 / ATCC MYA-565) (Filobasidiella neoformans), this protein is Class E vacuolar protein-sorting machinery protein HSE1 (HSE1).